Consider the following 416-residue polypeptide: Multifunctional CCA protein (416 aa).

Glycine 8 and arginine 11 together coordinate ATP. CTP is bound by residues glycine 8 and arginine 11. 2 residues coordinate Mg(2+): aspartate 21 and aspartate 23. Positions 91, 137, and 140 each coordinate ATP. Residues arginine 91, arginine 137, and arginine 140 each coordinate CTP. In terms of domain architecture, HD spans 228 to 329 (TGVHTLMVLA…VKIFDKADFW (102 aa)).

Belongs to the tRNA nucleotidyltransferase/poly(A) polymerase family. Bacterial CCA-adding enzyme type 1 subfamily. Monomer. Can also form homodimers and oligomers. Requires Mg(2+) as cofactor. The cofactor is Ni(2+).

The enzyme catalyses a tRNA precursor + 2 CTP + ATP = a tRNA with a 3' CCA end + 3 diphosphate. The catalysed reaction is a tRNA with a 3' CCA end + 2 CTP + ATP = a tRNA with a 3' CCACCA end + 3 diphosphate. Functionally, catalyzes the addition and repair of the essential 3'-terminal CCA sequence in tRNAs without using a nucleic acid template. Adds these three nucleotides in the order of C, C, and A to the tRNA nucleotide-73, using CTP and ATP as substrates and producing inorganic pyrophosphate. tRNA 3'-terminal CCA addition is required both for tRNA processing and repair. Also involved in tRNA surveillance by mediating tandem CCA addition to generate a CCACCA at the 3' terminus of unstable tRNAs. While stable tRNAs receive only 3'-terminal CCA, unstable tRNAs are marked with CCACCA and rapidly degraded. This Shewanella baltica (strain OS223) protein is Multifunctional CCA protein.